Consider the following 170-residue polypeptide: Adenine phosphoribosyltransferase (170 aa).

It belongs to the purine/pyrimidine phosphoribosyltransferase family. In terms of assembly, homodimer.

The protein resides in the cytoplasm. The enzyme catalyses AMP + diphosphate = 5-phospho-alpha-D-ribose 1-diphosphate + adenine. The protein operates within purine metabolism; AMP biosynthesis via salvage pathway; AMP from adenine: step 1/1. Catalyzes a salvage reaction resulting in the formation of AMP, that is energically less costly than de novo synthesis. The chain is Adenine phosphoribosyltransferase from Mycoplasma mycoides subsp. mycoides SC (strain CCUG 32753 / NCTC 10114 / PG1).